The primary structure comprises 226 residues: ATP-dependent dethiobiotin synthetase BioD (226 aa).

Residue 12 to 17 participates in ATP binding; it reads GIGKTV. Residue Thr16 participates in Mg(2+) binding. Lys37 is a catalytic residue. Thr41 contributes to the substrate binding site. ATP is bound by residues Asp49, 108–111, 169–170, and 197–199; these read EGAG, GS, and PAG. 2 residues coordinate Mg(2+): Asp49 and Glu108.

This sequence belongs to the dethiobiotin synthetase family. In terms of assembly, homodimer. Requires Mg(2+) as cofactor.

It is found in the cytoplasm. It carries out the reaction (7R,8S)-7,8-diammoniononanoate + CO2 + ATP = (4R,5S)-dethiobiotin + ADP + phosphate + 3 H(+). Its pathway is cofactor biosynthesis; biotin biosynthesis; biotin from 7,8-diaminononanoate: step 1/2. Catalyzes a mechanistically unusual reaction, the ATP-dependent insertion of CO2 between the N7 and N8 nitrogen atoms of 7,8-diaminopelargonic acid (DAPA, also called 7,8-diammoniononanoate) to form a ureido ring. The chain is ATP-dependent dethiobiotin synthetase BioD from Mycolicibacterium gilvum (strain PYR-GCK) (Mycobacterium gilvum (strain PYR-GCK)).